The following is a 726-amino-acid chain: MKVLTDLQKRIFAIVKKENGKPIPPGIVVRMMENQAGFPGKQQVYRAIDDLLEWHIFRKSGGATNQLLINYELADPVLDQKFQGILNLGNKNTGFVRPLDDDKTVYYIHFSNLAGALDGDLVEFCPLDKPQVGDKFDAAVLKIVKRSRVLYAGNFLIEYSDFGQEFRIVADNPRFYLTPIVNKASVPAELESNTKVAFQIDEYDPANNLCKVSIQQILGNNDEPLINLKAIMLDHSIVFEDNDVVEQQAAKLQFDEKEQSKPYRKDLTELAFVTIDPATSKDLDDAIYVKRTDKGFVLYVAIADVAYYVQRNSELDIEARHKTSSIYLPGYYVVPMLPERLSNELCSLNPNEKRYVVVCELNFDHEARLNFSEVYPATIVSQRRFAYSEVNDWLEDSDALKDESATVLESLKAGFTLSELIAEQRKKKGTIDLSHSETEVVVDQNYYPIEIRFLTHGKAETMIENLMVVANEAVAWTLTNHKVHLPYRVHPRPSKKKLQMLLENIVELKITQPNFVLDTVTSTQIAAWLKENKDNPSYDIFVILLLRTLGKAFYIVNPLIHFSIGSHHYTHFTSPIRRYADLTVHRLLWMNLFTPERFTDTEREQLNAELEQICETINDTEIKINGCERTANDYLTTLYLSKQVGQTFHGFISAITSFGIFMRMDENNFDGLIKITSIPEDFFVFEKDRMVLRGKRTNKVFRIGDRLTAKLTEIDTVQKRAILTLV.

In terms of domain architecture, RNB spans Arg-264 to Leu-592. Residues Gly-645–Val-726 enclose the S1 motif domain.

The protein belongs to the RNR ribonuclease family. RNase R subfamily.

It is found in the cytoplasm. The catalysed reaction is Exonucleolytic cleavage in the 3'- to 5'-direction to yield nucleoside 5'-phosphates.. Functionally, 3'-5' exoribonuclease that releases 5'-nucleoside monophosphates and is involved in maturation of structured RNAs. The protein is Ribonuclease R of Mycoplasma pneumoniae (strain ATCC 29342 / M129 / Subtype 1) (Mycoplasmoides pneumoniae).